A 127-amino-acid chain; its full sequence is Aspartate 1-decarboxylase (127 aa).

The active-site Schiff-base intermediate with substrate; via pyruvic acid is S25. The residue at position 25 (S25) is a Pyruvic acid (Ser). T57 is a binding site for substrate. The active-site Proton donor is Y58. Residue G73–A75 participates in substrate binding.

This sequence belongs to the PanD family. Heterooctamer of four alpha and four beta subunits. Pyruvate is required as a cofactor. Post-translationally, is synthesized initially as an inactive proenzyme, which is activated by self-cleavage at a specific serine bond to produce a beta-subunit with a hydroxyl group at its C-terminus and an alpha-subunit with a pyruvoyl group at its N-terminus.

It is found in the cytoplasm. The enzyme catalyses L-aspartate + H(+) = beta-alanine + CO2. The protein operates within cofactor biosynthesis; (R)-pantothenate biosynthesis; beta-alanine from L-aspartate: step 1/1. Its function is as follows. Catalyzes the pyruvoyl-dependent decarboxylation of aspartate to produce beta-alanine. In Bacillus velezensis (strain DSM 23117 / BGSC 10A6 / LMG 26770 / FZB42) (Bacillus amyloliquefaciens subsp. plantarum), this protein is Aspartate 1-decarboxylase.